The following is a 396-amino-acid chain: MQTLDPVTPALLPLRRVTRPVQVGALTIGGNAPVVVQSMINEDTLDTPGAVAAIRALHKAGCELVRVTVPSLAHARALERIRKTLEDTYRPVPLVADVHHDGGPIALEVARHVDKVRINPGLFVFRRARLGDYTAEDVERARAQIREELKPLVDVLGAQDKAMRIGVNHGSLSERMLYIHGDTPEGMVQSAVEFVEICEQLGYHNLVISLKASRVPVMIAVYRLAAKLLDARGMHYPFHLGVTEAGDGEYGRIKSTAGIATLLADGIGDTIRVSLTEDPLKEIPVCYGILQALGLRRTMVEYVACPSCGRTLFNLETVLHRVREATRHLTGLNIAVMGCIVNGPGEMADADYGYVGKTPGTISLYRGREEIKKVPEARGVEALVDLIKSDGRWVDP.

The [4Fe-4S] cluster site is built by C305, C308, C339, and E346.

It belongs to the IspG family. It depends on [4Fe-4S] cluster as a cofactor.

The enzyme catalyses (2E)-4-hydroxy-3-methylbut-2-enyl diphosphate + 2 oxidized [2Fe-2S]-[ferredoxin] + H2O = 2-C-methyl-D-erythritol 2,4-cyclic diphosphate + 2 reduced [2Fe-2S]-[ferredoxin] + H(+). It participates in isoprenoid biosynthesis; isopentenyl diphosphate biosynthesis via DXP pathway; isopentenyl diphosphate from 1-deoxy-D-xylulose 5-phosphate: step 5/6. Its function is as follows. Converts 2C-methyl-D-erythritol 2,4-cyclodiphosphate (ME-2,4cPP) into 1-hydroxy-2-methyl-2-(E)-butenyl 4-diphosphate. This is 4-hydroxy-3-methylbut-2-en-1-yl diphosphate synthase (ferredoxin) from Gloeobacter violaceus (strain ATCC 29082 / PCC 7421).